A 388-amino-acid chain; its full sequence is Granulocyte-macrophage colony-stimulating factor receptor subunit alpha (388 aa).

Residues Met-1–Ala-29 form the signal peptide. Over Leu-30–Pro-327 the chain is Extracellular. N-linked (GlcNAc...) asparagine glycosylation is found at Asn-43, Asn-63, Asn-106, Asn-132, Asn-165, and Asn-237. The Fibronectin type-III domain maps to Pro-228–Thr-324. Residues Trp-310–Ser-314 carry the WSXWS motif motif. Residues Gly-328–Val-348 form a helical membrane-spanning segment. Residues Thr-349–Pro-388 are Cytoplasmic-facing. Positions Leu-359–Arg-367 match the Box 1 motif motif.

Belongs to the type I cytokine receptor family. Type 5 subfamily. Heterodimer of an alpha and a beta subunit. The beta subunit is common to the IL3, IL5 and GM-CSF receptors. The signaling GM-CSF receptor complex is a dodecamer of two head-to-head hexamers of two alpha, two beta, and two ligand subunits.

The protein resides in the membrane. Low affinity receptor for granulocyte-macrophage colony-stimulating factor. Transduces a signal that results in the proliferation, differentiation, and functional activation of hematopoietic cells. This Mus musculus (Mouse) protein is Granulocyte-macrophage colony-stimulating factor receptor subunit alpha (Csf2ra).